The following is a 184-amino-acid chain: Photosystem I assembly protein Ycf4 (184 aa).

Helical transmembrane passes span 22–42 and 57–77; these read FCWA…GTSS and IVFF…LFIS.

It belongs to the Ycf4 family.

The protein resides in the plastid. The protein localises to the chloroplast thylakoid membrane. In terms of biological role, seems to be required for the assembly of the photosystem I complex. The protein is Photosystem I assembly protein Ycf4 of Lactuca sativa (Garden lettuce).